A 501-amino-acid polypeptide reads, in one-letter code: G protein-activated inward rectifier potassium channel 1 (501 aa).

Positions 1–40 (MSALRRKFGDDYQVVTTSSSGSGLQPQGPGQDPQQQLVPK) are disordered. The Cytoplasmic segment spans residues 1-80 (MSALRRKFGD…LFTTLVDLKW (80 aa)). A compositionally biased stretch (low complexity) spans 18–38 (SSSGSGLQPQGPGQDPQQQLV). A helical membrane pass occupies residues 81–105 (RWNLFIFILTYTVAWLFMASMWWVI). Residues 106-129 (AYTRGDLNKAHVGNYTPCVANVYN) are Extracellular-facing. Asparagine 119 carries an N-linked (GlcNAc...) asparagine glycan. The helical; Pore-forming intramembrane region spans 130–141 (FPSAFLFFIETE). The pore-forming intramembrane region spans 142–148 (ATIGYGY). The short motif at 143-148 (TIGYGY) is the Selectivity filter element. The Extracellular portion of the chain corresponds to 149–157 (RYITDKCPE). The helical transmembrane segment at 158–179 (GIILFLFQSILGSIVDAFLIGC) threads the bilayer. Residues 180–501 (MFIKMSQPKK…LRKMNSDRFT (322 aa)) are Cytoplasmic-facing. Residues 182 to 209 (IKMSQPKKRAETLMFSEHAVISMRDGKL) form a polyphosphoinositide (PIP2)-binding region. Serine 385 and serine 424 each carry phosphoserine.

Belongs to the inward rectifier-type potassium channel (TC 1.A.2.1) family. KCNJ3 subfamily. As to quaternary structure, associates with KCNJ5/GIRK4 or KCNJ6/GIRK2 to form a G-protein activated heteromultimer pore-forming unit. The resulting inward current is much larger. Associates with KCNJ9/GIRK3 to form a G-protein activated heteromultimer pore-forming unit.

The protein localises to the membrane. The catalysed reaction is K(+)(in) = K(+)(out). With respect to regulation, heteromultimer composed of KCNJ3/GIRK1 and KCNJ5/GIRK4 is activated by phosphatidylinositol 4,5 biphosphate (PtdIns(4,5)P2). Inward rectifier potassium channels are characterized by a greater tendency to allow potassium to flow into the cell rather than out of it. Their voltage dependence is regulated by the concentration of extracellular potassium; as external potassium is raised, the voltage range of the channel opening shifts to more positive voltages. The inward rectification is mainly due to the blockage of outward current by internal magnesium. This potassium channel is controlled by G proteins. This receptor plays a crucial role in regulating the heartbeat. This chain is G protein-activated inward rectifier potassium channel 1 (KCNJ3), found in Homo sapiens (Human).